Consider the following 510-residue polypeptide: Probable allantoinase 2 (510 aa).

6 residues coordinate Zn(2+): His-97, His-99, Lys-185, His-228, His-287, and Asp-360. Lys-185 carries the post-translational modification N6-carboxylysine.

It belongs to the metallo-dependent hydrolases superfamily. Allantoinase family. Homotetramer. It depends on Zn(2+) as a cofactor. In terms of processing, carboxylation allows a single lysine to coordinate two zinc ions.

The enzyme catalyses (S)-allantoin + H2O = allantoate + H(+). It functions in the pathway nitrogen metabolism; (S)-allantoin degradation; allantoate from (S)-allantoin: step 1/1. In Dictyostelium discoideum (Social amoeba), this protein is Probable allantoinase 2 (allB2).